Consider the following 573-residue polypeptide: MAALRKRIAELEGRLASQEPAEREEHEEVTHNILDFPGDDHLPDWNDFNNMSLPTSNNTSVGDTETSFSNFIASTTAQSMPMTMASLTSTPVTTASLTTAALMPVVPLTPATTVSIATPQLHTLSGFIPAELDQLYFERVHPAIPLLHQRTYLSWSRKDIKKKSQLCLQHAMWTLAALQSAQYRYLQETLYRSCTQMLTSICLSDSGQDPFDTEQIQAWLLITVYELMRSFHRQAWMSVGRAFRLLQLLRYHELDNPALGIPAGQDFIEREEQRRAFWMAYVLDHLFGVSNNWPITLNELVVCTRLPAFEEDFQSERPVLGSFLSEAITEQTPRYLSAFNETIIFATLCGRRLFYGQQFHVRSAYGDMYSNWSNSTLMLDNILRQRVDILSQCYPPLDEASGPMMHFVSTMAQCSIIYSCTGADMMLRVDEGNAAMQTEYALRAATAAEHVIRLAQMLTRCFVFKVLSFSPPSFTTQHRHTSEKKYTLTRRQQIHPLASIPLMLCAEFLFKNQNVSEKFATLLERLLKEFEQIRDIEDPAQSYIDVMKRWQCSAKNSDRQQRQPSVDSAALSA.

The protein localises to the nucleus. In terms of biological role, transcription factor that regulates the expression of the gene cluster that mediates the biosynthesis of the mycotoxin ascochitine, an o-quinone methide that plays a possible protective role against other microbial competitors in nature and is considered to be important for pathogenicity of legume-associated Didymella species. This Didymella fabae (Leaf and pod spot disease fungus) protein is Ascochitine biosynthesis cluster transcriptional regulator.